A 232-amino-acid chain; its full sequence is Ubiquinone biosynthesis O-methyltransferase (232 aa).

Residues Arg-36, Gly-55, Asp-76, and Leu-120 each coordinate S-adenosyl-L-methionine.

It belongs to the methyltransferase superfamily. UbiG/COQ3 family.

It catalyses the reaction a 3-demethylubiquinol + S-adenosyl-L-methionine = a ubiquinol + S-adenosyl-L-homocysteine + H(+). The catalysed reaction is a 3-(all-trans-polyprenyl)benzene-1,2-diol + S-adenosyl-L-methionine = a 2-methoxy-6-(all-trans-polyprenyl)phenol + S-adenosyl-L-homocysteine + H(+). It participates in cofactor biosynthesis; ubiquinone biosynthesis. In terms of biological role, O-methyltransferase that catalyzes the 2 O-methylation steps in the ubiquinone biosynthetic pathway. This chain is Ubiquinone biosynthesis O-methyltransferase, found in Pseudomonas syringae pv. tomato (strain ATCC BAA-871 / DC3000).